We begin with the raw amino-acid sequence, 469 residues long: Argininosuccinate lyase (469 aa).

It belongs to the lyase 1 family. Argininosuccinate lyase subfamily.

The protein localises to the cytoplasm. The enzyme catalyses 2-(N(omega)-L-arginino)succinate = fumarate + L-arginine. Its pathway is amino-acid biosynthesis; L-arginine biosynthesis; L-arginine from L-ornithine and carbamoyl phosphate: step 3/3. The chain is Argininosuccinate lyase from Burkholderia mallei (strain NCTC 10247).